The primary structure comprises 162 residues: Glycine cleavage system H protein, mitochondrial (162 aa).

The N-terminal 31 residues, 1–31 (MALRMWASSTANALRLSSATRPHFSPLSRCF), are a transit peptide targeting the mitochondrion. Positions 53–135 (VATIGITDHA…YEDGWMIKVK (83 aa)) constitute a Lipoyl-binding domain. An N6-lipoyllysine modification is found at Lys-94.

The protein belongs to the GcvH family. As to quaternary structure, the glycine cleavage system is composed of four proteins: P, T, L and H. (R)-lipoate is required as a cofactor.

The protein localises to the mitochondrion. Its function is as follows. The glycine cleavage system catalyzes the degradation of glycine. The H protein shuttles the methylamine group of glycine from the P protein to the T protein. In Flaveria anomala (Yellowtops), this protein is Glycine cleavage system H protein, mitochondrial (GDCSH).